A 415-amino-acid polypeptide reads, in one-letter code: Adenylosuccinate synthetase (415 aa).

GTP is bound by residues 12–18 (GDEGKGK) and 40–42 (GHT). D13 (proton acceptor) is an active-site residue. The Mg(2+) site is built by D13 and G40. IMP is bound by residues 13–16 (DEGK), 38–41 (NAGH), T125, R139, Q219, T234, and R298. H41 serves as the catalytic Proton donor. 294 to 300 (TTTGRPR) serves as a coordination point for substrate. GTP contacts are provided by residues R300, 326–328 (KLD), and 404–406 (STG).

This sequence belongs to the adenylosuccinate synthetase family. In terms of assembly, homodimer. Mg(2+) serves as cofactor.

It is found in the cytoplasm. The catalysed reaction is IMP + L-aspartate + GTP = N(6)-(1,2-dicarboxyethyl)-AMP + GDP + phosphate + 2 H(+). It functions in the pathway purine metabolism; AMP biosynthesis via de novo pathway; AMP from IMP: step 1/2. Plays an important role in the de novo pathway of purine nucleotide biosynthesis. Catalyzes the first committed step in the biosynthesis of AMP from IMP. This is Adenylosuccinate synthetase from Wolinella succinogenes (strain ATCC 29543 / DSM 1740 / CCUG 13145 / JCM 31913 / LMG 7466 / NCTC 11488 / FDC 602W) (Vibrio succinogenes).